A 1091-amino-acid polypeptide reads, in one-letter code: TATA element modulatory factor (1091 aa).

Disordered regions lie at residues 42–86 (IPYG…KPVR) and 100–280 (FLSP…DAKS). Over residues 57-81 (WDTSTWGLNSTSSEPQSPPTASQAI) the composition is skewed to polar residues. A phosphoserine mark is found at Ser-73, Ser-78, Ser-112, and Ser-136. Low complexity-rich tracts occupy residues 111 to 122 (KSPVVSKPPSKS), 131 to 142 (SSLQESSSPGQS), and 194 to 211 (SENV…TTST). Ser-213 carries the phosphoserine modification. The span at 217 to 234 (ETKDMALEPKEQKHEDRQ) shows a compositional bias: basic and acidic residues. 2 stretches are compositionally biased toward low complexity: residues 242 to 253 (VSSFSSGTSTTS) and 264 to 273 (ISESSASSRQ). Phosphoserine is present on residues Ser-324, Ser-326, Ser-329, Ser-334, Ser-340, and Ser-357. The tract at residues 329 to 338 (SLDSRSVSEI) is interaction with Elongin BC complex. A disordered region spans residues 360–443 (TPKTKVVEST…NQPKAPPEKE (84 aa)). Positions 368–379 (STEENAEEEEGN) are enriched in acidic residues. A phosphoserine mark is found at Ser-411 and Ser-540. Coiled coils occupy residues 443–767 (EDVC…STAR) and 824–894 (IQMS…SQLE). Phosphoserine occurs at positions 923 and 926. Position 927 is a phosphothreonine (Thr-927). Ser-931 is subject to Phosphoserine. The stretch at 984–1090 (IENLQSQLKL…QIDELLRQRL (107 aa)) forms a coiled coil.

In terms of assembly, component of the SNF/SWI transcription factor complexes. Interacts with RAB6A. Interacts with TCEB1. Interacts with STAT3 and FER. Interacts with TRNP1; may regulate TRNP1 proteasomal degradation. Phosphorylated by FER.

The protein localises to the cytoplasm. It is found in the nucleus. Its subcellular location is the golgi apparatus membrane. Its function is as follows. Potential coactivator of the androgen receptor. May play critical roles in two RAB6-dependent retrograde transport processes: one from endosomes to the Golgi and the other from the Golgi to the ER. Mediates STAT3 degradation. This is TATA element modulatory factor (Tmf1) from Mus musculus (Mouse).